Reading from the N-terminus, the 269-residue chain is Ribosomal RNA large subunit methyltransferase E (269 aa).

S-adenosyl-L-methionine is bound by residues glycine 48, tryptophan 50, aspartate 68, aspartate 86, and aspartate 111. Residue lysine 151 is the Proton acceptor of the active site. The 59-residue stretch at 198–256 (PVAAGDRIEVTVEERGDEGDGIAYVEGYSIFVSDADVGETVTVEVVDAKPRFGFATRVD) folds into the TRAM domain.

The protein belongs to the class I-like SAM-binding methyltransferase superfamily. RNA methyltransferase RlmE family.

Its subcellular location is the cytoplasm. It catalyses the reaction uridine(2552) in 23S rRNA + S-adenosyl-L-methionine = 2'-O-methyluridine(2552) in 23S rRNA + S-adenosyl-L-homocysteine + H(+). In terms of biological role, specifically methylates the uridine in position 2552 of 23S rRNA at the 2'-O position of the ribose in the fully assembled 50S ribosomal subunit. The sequence is that of Ribosomal RNA large subunit methyltransferase E from Halorubrum lacusprofundi (strain ATCC 49239 / DSM 5036 / JCM 8891 / ACAM 34).